Reading from the N-terminus, the 150-residue chain is UPF0260 protein PP_4587 (150 aa).

It belongs to the UPF0260 family.

This Pseudomonas putida (strain ATCC 47054 / DSM 6125 / CFBP 8728 / NCIMB 11950 / KT2440) protein is UPF0260 protein PP_4587.